The sequence spans 246 residues: Sugar fermentation stimulation protein homolog (246 aa).

It belongs to the SfsA family.

The chain is Sugar fermentation stimulation protein homolog from Prochlorococcus marinus (strain MIT 9301).